Reading from the N-terminus, the 299-residue chain is 4-diphosphocytidyl-2-C-methyl-D-erythritol kinase (299 aa).

Residue lysine 18 is part of the active site. Residue 104-114 coordinates ATP; it reads PIASGIGGGSS. Aspartate 146 is a catalytic residue.

Belongs to the GHMP kinase family. IspE subfamily.

It catalyses the reaction 4-CDP-2-C-methyl-D-erythritol + ATP = 4-CDP-2-C-methyl-D-erythritol 2-phosphate + ADP + H(+). Its pathway is isoprenoid biosynthesis; isopentenyl diphosphate biosynthesis via DXP pathway; isopentenyl diphosphate from 1-deoxy-D-xylulose 5-phosphate: step 3/6. Its function is as follows. Catalyzes the phosphorylation of the position 2 hydroxy group of 4-diphosphocytidyl-2C-methyl-D-erythritol. The protein is 4-diphosphocytidyl-2-C-methyl-D-erythritol kinase of Brucella abortus biovar 1 (strain 9-941).